The chain runs to 124 residues: Small ribosomal subunit protein bS6 (124 aa).

The protein belongs to the bacterial ribosomal protein bS6 family.

Functionally, binds together with bS18 to 16S ribosomal RNA. This is Small ribosomal subunit protein bS6 from Bordetella avium (strain 197N).